Consider the following 133-residue polypeptide: Nickel-responsive regulator (133 aa).

Residues histidine 76, histidine 87, histidine 89, and cysteine 95 each contribute to the Ni(2+) site.

The protein belongs to the transcriptional regulatory CopG/NikR family. Homotetramer. Ni(2+) serves as cofactor.

Functionally, transcriptional repressor of the nikABCDE operon. Is active in the presence of excessive concentrations of intracellular nickel. This Salmonella paratyphi A (strain ATCC 9150 / SARB42) protein is Nickel-responsive regulator.